The chain runs to 427 residues: Endothelin-1 receptor (427 aa).

A signal peptide spans 1–20 (METFWLRVSFWVALVGGVIS). Residues 21–80 (DNPESYSTNLSIHVDSVTTFRGTELSFVVTTHQPTNLALPSNGSMHNYCPQQTKITSAFK) are Extracellular-facing. N-linked (GlcNAc...) asparagine glycosylation is found at N29 and N62. A helical membrane pass occupies residues 81–102 (YINTVISCTIFIVGMVGNATLL). The Cytoplasmic segment spans residues 103–112 (RIIYQNKCMR). The chain crosses the membrane as a helical span at residues 113–132 (NGPNALIASLALGDLIYVVI). The Extracellular segment spans residues 133–159 (DLPINVFKLLAGRWPFEQNDFGVFLCK). C158 and C239 form a disulfide bridge. A helical membrane pass occupies residues 160-181 (LFPFLQKSSVGITVLNLCALSV). The Cytoplasmic segment spans residues 182 to 205 (DRYRAVASWSRVQGIGIPLVTAIE). The chain crosses the membrane as a helical span at residues 206-229 (IVSIWILSFILAIPEAIGFVMVPF). Residues 230–256 (EYKGAQHRTCMLNATSKFMEFYQDVKD) lie on the Extracellular side of the membrane. The chain crosses the membrane as a helical span at residues 257–278 (WWLFGFYFCMPLVCTAIFYTLM). The Cytoplasmic segment spans residues 279–306 (TCEMLNRRNGSLRIALSEHLKQRREVAK). Residues 307 to 328 (TVFCLVVIFALCWFPLHLSRIL) traverse the membrane as a helical segment. Residues 329 to 347 (KKTVYDEMDTNRCELLSFL) are Extracellular-facing. A helical transmembrane segment spans residues 348–372 (LLMDYIGINLATMNSCINPIALYFV). The Cytoplasmic portion of the chain corresponds to 373-427 (SKKFKNCFQSCLCCCCYQSKSLMTSVPMNGTSIQWKNPEQNNHNTERSSHKDSIN). Polar residues predominate over residues 405–415 (IQWKNPEQNNH). A disordered region spans residues 405 to 427 (IQWKNPEQNNHNTERSSHKDSIN). The span at 416 to 427 (NTERSSHKDSIN) shows a compositional bias: basic and acidic residues. The residue at position 425 (S425) is a Phosphoserine.

This sequence belongs to the G-protein coupled receptor 1 family. Endothelin receptor subfamily. EDNRA sub-subfamily. As to quaternary structure, interacts with HDAC7 and KAT5.

It localises to the cell membrane. Functionally, receptor for endothelin-1. Mediates its action by association with G proteins that activate a phosphatidylinositol-calcium second messenger system. The rank order of binding affinities for ET-A is: ET1 &gt; ET2 &gt;&gt; ET3. This chain is Endothelin-1 receptor, found in Ovis aries (Sheep).